Consider the following 237-residue polypeptide: Putative glutathione-dependent formaldehyde-activating enzyme (237 aa).

In terms of domain architecture, CENP-V/GFA spans 38 to 152 (ITLICHCPPS…LGQSGGSEGE (115 aa)). Zn(2+) is bound by residues C42, C44, C67, C69, C72, C114, and C117.

Belongs to the Gfa family. Requires Zn(2+) as cofactor.

The enzyme catalyses S-(hydroxymethyl)glutathione = glutathione + formaldehyde. It participates in one-carbon metabolism; formaldehyde degradation; formate from formaldehyde (glutathione route): step 1/3. Its function is as follows. Catalyzes the condensation of formaldehyde and glutathione to S-hydroxymethylglutathione. The protein is Putative glutathione-dependent formaldehyde-activating enzyme of Sordaria macrospora (strain ATCC MYA-333 / DSM 997 / K(L3346) / K-hell).